A 348-amino-acid polypeptide reads, in one-letter code: UDP-rhamnose/UDP-galactose transporter 2 (348 aa).

10 helical membrane passes run 12–32 (AVSDVGAWAMNVTSSVGIIMA), 44–64 (FSFATTLTGFHFALTALVGMV), 81–101 (LLWFSLVANISIAAMNFSLML), 104–124 (VGFYQISKLSMIPVVCVMEWV), 133–153 (EVKASVMVVVVGVGICTVTDV), 160–180 (FICACTAVFSTSLQQISIGSL), 196–216 (APIQAISLLIFGPFVDYFLSG), 230–250 (LCILLSCALAVFCNISQYLCI), 257–277 (SFQVLGHMKTVCVLTLGWLIF), and 286–306 (IAGMVLAVVGMVIYSWAVELE).

The protein belongs to the TPT transporter family. TPT (TC 2.A.7.9) subfamily.

The protein resides in the golgi apparatus membrane. Nucleotide-sugar transporter that transports UDP-rhamnose or UDP-galactose and UMP in a strict counter-exchange mode. The sequence is that of UDP-rhamnose/UDP-galactose transporter 2 from Arabidopsis thaliana (Mouse-ear cress).